The sequence spans 144 residues: D-aminoacyl-tRNA deacylase (144 aa).

Residues 136–137 (GP) carry the Gly-cisPro motif, important for rejection of L-amino acids motif.

This sequence belongs to the DTD family. Homodimer.

The protein localises to the cytoplasm. The catalysed reaction is glycyl-tRNA(Ala) + H2O = tRNA(Ala) + glycine + H(+). The enzyme catalyses a D-aminoacyl-tRNA + H2O = a tRNA + a D-alpha-amino acid + H(+). An aminoacyl-tRNA editing enzyme that deacylates mischarged D-aminoacyl-tRNAs. Also deacylates mischarged glycyl-tRNA(Ala), protecting cells against glycine mischarging by AlaRS. Acts via tRNA-based rather than protein-based catalysis; rejects L-amino acids rather than detecting D-amino acids in the active site. By recycling D-aminoacyl-tRNA to D-amino acids and free tRNA molecules, this enzyme counteracts the toxicity associated with the formation of D-aminoacyl-tRNA entities in vivo and helps enforce protein L-homochirality. The polypeptide is D-aminoacyl-tRNA deacylase (Glaesserella parasuis serovar 5 (strain SH0165) (Haemophilus parasuis)).